Consider the following 309-residue polypeptide: Pantothenate kinase (309 aa).

Residue 92 to 99 (GSVAVGKS) participates in ATP binding.

It belongs to the prokaryotic pantothenate kinase family.

It is found in the cytoplasm. It carries out the reaction (R)-pantothenate + ATP = (R)-4'-phosphopantothenate + ADP + H(+). It participates in cofactor biosynthesis; coenzyme A biosynthesis; CoA from (R)-pantothenate: step 1/5. This chain is Pantothenate kinase, found in Latilactobacillus sakei subsp. sakei (strain 23K) (Lactobacillus sakei subsp. sakei).